Reading from the N-terminus, the 74-residue chain is Lambda-hexatoxin-Hv1d (74 aa).

An N-terminal signal peptide occupies residues 1–22 (MNTATCFIVLLVVATVIGGIEA). The propeptide occupies 23–35 (GESDMRKDVMGLF). Cystine bridges form between cysteine 40-cysteine 54, cysteine 47-cysteine 59, cysteine 50-cysteine 51, and cysteine 53-cysteine 69.

The protein belongs to the neurotoxin 11 (kappa toxin) family. Expressed by the venom gland.

The protein resides in the secreted. Its function is as follows. This excitatory toxin inhibits insect calcium-activated potassium (KCa) channels (Slo-type). This is Lambda-hexatoxin-Hv1d from Hadronyche versuta (Blue mountains funnel-web spider).